Consider the following 815-residue polypeptide: MGSDKRVSRTERSGRYGSIIDRDDRDERESRSRRRDSDYKRSSDDRRGDRYDDYRDYDSPERERERRNSDRSEDGYHSDGDYGEHDYRHDISDERESKTIMLRGLPITITESDIREMMESFEGPQPADVRLMKRKTGVSRGFAFVEFYHLQDATSWMEANQKKLVIQGKHIAMHYSNPRPKFEDWLCNKCCLNNFRKRLKCFRCGADKFDSEQEVPPGTTESVQSVDYYCDTIILRNIAPHTVVDSIMTALSPYASLAVNNIRLIKDKQTQQNRGFAFVQLSSAMDASQLLQILQSLHPPLKIDGKTIGVDFAKSARKDLVLPDGNRVSAFSVASTAIAAAQWSSTQSQSGEGGSVDYSYLQPGQDGYAQYAQYSQDYQQFYQQQAGGLESDASSASGTAVTTTSAAVVSQSPQLYNQTSNPPSSPTEEAQPSTSTSTQAPAASPTGVVPGTKYAVPDTSTYQYDESSGYYYDPTTGLYYDPNSQYYYNSLTQQYLYWDGEKETYMLAAESNSHQQTGLPPAKEGKEKKEKPKSKTAQQIAKDMERWAKSLNKQKENFKNSFQPVNSLREEERRESAAADAGFALFEKKGALAERQQLIPELVRNGDEDNPLKRGLVAAYSGDSDNEEELVERLESEEEKLADWKKMACLLCRRQFPNKDALVRHQQLSDLHKQNMDIYRRSRLSEQELEALELREREMKYRDRAAERREKYGIPEPPEPKRKKQFDAGTVNYEQPTKDGIDHSNIGNKMLQAMGWREGSGLGRKCQGITAPIEAQVRLKGAGLGAKGSAYGLSGADSYKDAVRKAMFARFTEME.

Residues 1 to 93 are disordered; the sequence is MGSDKRVSRT…EHDYRHDISD (93 aa). Residues Ser18, Ser59, Ser69, Ser72, and Ser78 each carry the phosphoserine modification. Positions 98-178 constitute an RRM 1 domain; that stretch reads KTIMLRGLPI…KHIAMHYSNP (81 aa). A RanBP2-type zinc finger spans residues 181-210; it reads KFEDWLCNKCCLNNFRKRLKCFRCGADKFD. One can recognise an RRM 2 domain in the interval 231 to 315; that stretch reads DTIILRNIAP…KTIGVDFAKS (85 aa). The segment at 321 to 809 is required for interaction with U2AF2; it reads VLPDGNRVSA…KDAVRKAMFA (489 aa). Residues 411 to 421 are compositionally biased toward polar residues; sequence QSPQLYNQTSN. 2 disordered regions span residues 411-467 and 510-539; these read QSPQ…YDES and ESNS…TAQQ. A compositionally biased stretch (low complexity) spans 426–446; the sequence is PTEEAQPSTSTSTQAPAASPT. A Phosphoserine modification is found at Ser444. Positions 452 to 535 are sufficient for interaction with ACIN1, PRPF8, SFRS3, SNRPB, SNRPN, SNRNP70 and SNRNP200; the sequence is TKYAVPDTST…KEKKEKPKSK (84 aa). Ser621 and Ser624 each carry phosphoserine. The C2H2-type zinc-finger motif lies at 647-672; sequence MACLLCRRQFPNKDALVRHQQLSDLH. Residues 743-789 enclose the G-patch domain; sequence HSNIGNKMLQAMGWREGSGLGRKCQGITAPIEAQVRLKGAGLGAKGS.

This sequence belongs to the RBM5/RBM10 family. Component of the spliceosome A complex (also known as the prespliceosome). Appears to dissociate from the spliceosome upon formation of the spliceosome B complex (also known as the precatalytic spliceosome), in which the heterotrimeric U4/U6.U5 snRNPs are bound. Interacts with U2AF2; this interaction is direct. Also interacts with ACIN1, PRPF8, SFRS3, SNRPB, SNRPN, SNRNP70 and SNRNP200; these interactions may be indirect.

The protein localises to the nucleus. Functionally, component of the spliceosome A complex. Binds to ssRNA containing the consensus sequence 5'-AGGUAA-3'. Regulates alternative splicing of a number of mRNAs. May modulate splice site pairing after recruitment of the U1 and U2 snRNPs to the 5' and 3' splice sites of the intron. May both positively and negatively regulate apoptosis by regulating the alternative splicing of several genes involved in this process, including FAS and CASP2/caspase-2. In the case of FAS, promotes production of a soluble form of FAS that inhibits apoptosis. In the case of CASP2/caspase-2, promotes production of a catalytically active form of CASP2/Caspase-2 that induces apoptosis. The sequence is that of RNA-binding protein 5 (RBM5) from Bos taurus (Bovine).